The primary structure comprises 136 residues: Large-conductance mechanosensitive channel (136 aa).

Helical transmembrane passes span 15–35, 38–58, and 80–100; these read IDLA…NSIV, IFMP…MFIQ, and GHFI…FFFV.

This sequence belongs to the MscL family. As to quaternary structure, homopentamer.

It is found in the cell inner membrane. In terms of biological role, channel that opens in response to stretch forces in the membrane lipid bilayer. May participate in the regulation of osmotic pressure changes within the cell. The protein is Large-conductance mechanosensitive channel of Bartonella tribocorum (strain CIP 105476 / IBS 506).